Here is a 64-residue protein sequence, read N- to C-terminus: Large ribosomal subunit protein bL35 (64 aa).

The segment at 1-28 is disordered; it reads MPKMKTHSGAKKRFKLTGSGKLKRQQAN.

This sequence belongs to the bacterial ribosomal protein bL35 family.

The chain is Large ribosomal subunit protein bL35 from Renibacterium salmoninarum (strain ATCC 33209 / DSM 20767 / JCM 11484 / NBRC 15589 / NCIMB 2235).